We begin with the raw amino-acid sequence, 22 residues long: leu leader peptide (22 aa).

The disordered stretch occupies residues 1–22; sequence MLHHMTSRANLLLLRRGGSQRS. The segment covering 11 to 22 has biased composition (low complexity); it reads LLLLRRGGSQRS.

Its function is as follows. Involved in control of the biosynthesis of leucine. This is leu leader peptide (leuL) from Corynebacterium glutamicum (strain ATCC 13032 / DSM 20300 / JCM 1318 / BCRC 11384 / CCUG 27702 / LMG 3730 / NBRC 12168 / NCIMB 10025 / NRRL B-2784 / 534).